The primary structure comprises 156 residues: Ribosomal RNA large subunit methyltransferase H (156 aa).

S-adenosyl-L-methionine is bound by residues L73, G104, and 123–128 (LSPLTL).

The protein belongs to the RNA methyltransferase RlmH family. In terms of assembly, homodimer.

It localises to the cytoplasm. It catalyses the reaction pseudouridine(1915) in 23S rRNA + S-adenosyl-L-methionine = N(3)-methylpseudouridine(1915) in 23S rRNA + S-adenosyl-L-homocysteine + H(+). Functionally, specifically methylates the pseudouridine at position 1915 (m3Psi1915) in 23S rRNA. In Hahella chejuensis (strain KCTC 2396), this protein is Ribosomal RNA large subunit methyltransferase H.